The following is a 1412-amino-acid chain: uncharacterized protein (1412 aa).

Residues 1 to 22 (MESINVVNSVEDLPGFNPDENV) form a disordered region. Coiled-coil stretches lie at residues 317-377 (NNDF…ILRH) and 732-800 (SKEA…SDDE). Residues 778 to 808 (SRKRKHEDIVKEHEAEKRDSDDEDDFEEVDV) are disordered. Residues 783-797 (HEDIVKEHEAEKRDS) are compositionally biased toward basic and acidic residues. Acidic residues predominate over residues 798-808 (DDEDDFEEVDV).

This is an uncharacterized protein from Magallana gigas (Pacific oyster).